Here is a 55-residue protein sequence, read N- to C-terminus: Large ribosomal subunit protein bL33 (55 aa).

The protein belongs to the bacterial ribosomal protein bL33 family.

This chain is Large ribosomal subunit protein bL33, found in Erythrobacter litoralis (strain HTCC2594).